Here is a 77-residue protein sequence, read N- to C-terminus: uncharacterized protein (77 aa).

This is an uncharacterized protein from Bos taurus (Bovine).